The sequence spans 332 residues: Abscisic acid-inducible protein kinase (332 aa).

Residues 1–8 and K23 contribute to the ATP site; that span reads GSGNFGVA. Residues 1-250 enclose the Protein kinase domain; it reads GSGNFGVAKL…IPEIKNHPWF (250 aa). D113 (proton acceptor) is an active-site residue.

The protein belongs to the protein kinase superfamily. Ser/Thr protein kinase family. Post-translationally, autophosphorylated.

It carries out the reaction L-seryl-[protein] + ATP = O-phospho-L-seryl-[protein] + ADP + H(+). It catalyses the reaction L-threonyl-[protein] + ATP = O-phospho-L-threonyl-[protein] + ADP + H(+). Its function is as follows. Involved in water-stress responses. This chain is Abscisic acid-inducible protein kinase, found in Triticum aestivum (Wheat).